A 128-amino-acid chain; its full sequence is Large-conductance mechanosensitive channel (128 aa).

2 consecutive transmembrane segments (helical) span residues 10-30 and 76-96; these read FAMRGNVVDMAVGVIIGGAFG and GMFIQNVFDFIIIAFAIFLMI.

The protein belongs to the MscL family. In terms of assembly, homopentamer.

Its subcellular location is the cell inner membrane. Its function is as follows. Channel that opens in response to stretch forces in the membrane lipid bilayer. May participate in the regulation of osmotic pressure changes within the cell. This chain is Large-conductance mechanosensitive channel, found in Actinobacillus succinogenes (strain ATCC 55618 / DSM 22257 / CCUG 43843 / 130Z).